A 282-amino-acid chain; its full sequence is Protease HtpX homolog (282 aa).

2 consecutive transmembrane segments (helical) span residues 6 to 26 (TFIL…LIGG) and 28 to 48 (QGVI…YFFS). Residue histidine 130 participates in Zn(2+) binding. Glutamate 131 is an active-site residue. Histidine 134 lines the Zn(2+) pocket. The next 2 helical transmembrane spans lie at 140 to 160 (ILIG…ANFA) and 177 to 197 (ILMI…QMAI). Glutamate 202 contributes to the Zn(2+) binding site.

This sequence belongs to the peptidase M48B family. Zn(2+) serves as cofactor.

The protein localises to the cell inner membrane. The polypeptide is Protease HtpX homolog (Campylobacter hominis (strain ATCC BAA-381 / DSM 21671 / CCUG 45161 / LMG 19568 / NCTC 13146 / CH001A)).